The following is a 358-amino-acid chain: 3-dehydroquinate synthase (358 aa).

Residues 70-75, 104-108, 128-129, Lys141, Lys150, and 168-171 each bind NAD(+); these read DGEQYK, GVIGD, TT, and CLHT. Glu183, His246, and His263 together coordinate Zn(2+).

The protein belongs to the sugar phosphate cyclases superfamily. Dehydroquinate synthase family. Requires Co(2+) as cofactor. The cofactor is Zn(2+). It depends on NAD(+) as a cofactor.

The protein localises to the cytoplasm. It catalyses the reaction 7-phospho-2-dehydro-3-deoxy-D-arabino-heptonate = 3-dehydroquinate + phosphate. It functions in the pathway metabolic intermediate biosynthesis; chorismate biosynthesis; chorismate from D-erythrose 4-phosphate and phosphoenolpyruvate: step 2/7. Catalyzes the conversion of 3-deoxy-D-arabino-heptulosonate 7-phosphate (DAHP) to dehydroquinate (DHQ). The polypeptide is 3-dehydroquinate synthase (Shewanella loihica (strain ATCC BAA-1088 / PV-4)).